Here is a 164-residue protein sequence, read N- to C-terminus: Phosphopantetheine adenylyltransferase (164 aa).

Residue Ser9 coordinates substrate. ATP is bound by residues 9–10 and His17; that span reads SF. Lys41, Val78, and Arg92 together coordinate substrate. ATP-binding positions include 93–95, Glu103, and 128–134; these read GLR and SRPITAT.

This sequence belongs to the bacterial CoaD family. In terms of assembly, homohexamer. Mg(2+) serves as cofactor.

It is found in the cytoplasm. The enzyme catalyses (R)-4'-phosphopantetheine + ATP + H(+) = 3'-dephospho-CoA + diphosphate. The protein operates within cofactor biosynthesis; coenzyme A biosynthesis; CoA from (R)-pantothenate: step 4/5. In terms of biological role, reversibly transfers an adenylyl group from ATP to 4'-phosphopantetheine, yielding dephospho-CoA (dPCoA) and pyrophosphate. The protein is Phosphopantetheine adenylyltransferase of Agrobacterium fabrum (strain C58 / ATCC 33970) (Agrobacterium tumefaciens (strain C58)).